The primary structure comprises 417 residues: Calreticulin (417 aa).

A signal peptide spans 1–17; that stretch reads MLLPVPLLLGLVGLAAA. Residues 18–197 form an N-domain region; sequence EPTIYFKEQF…NSQVESGSLE (180 aa). Ca(2+) contacts are provided by Gln-26, Lys-62, and Lys-64. Lys-64 is subject to N6-(2-hydroxyisobutyryl)lysine. An alpha-D-glucoside-binding residues include Tyr-109, Lys-111, Tyr-128, and Asp-135. A disulfide bond links Cys-137 and Cys-163. Lys-159 is subject to N6-acetyllysine. A 1-1 repeat occupies 191-202; the sequence is VESGSLEDDWDF. Positions 191–255 are 4 X approximate repeats; the sequence is VESGSLEDDW…DAKKPEDWDE (65 aa). A disordered region spans residues 193–277; sequence SGSLEDDWDF…NPEYKGEWKP (85 aa). The tract at residues 198-308 is P-domain; it reads DDWDFLPPKK…YSPDSNIYAY (111 aa). Residues 207–251 are compositionally biased toward basic and acidic residues; sequence KIKDPDAVKPEDWDERAKIDDPTDSKPEDWDKPEHIPDPDAKKPE. Lys-209 bears the N6-acetyllysine mark. 6 repeat units span residues 210 to 221, 227 to 238, 244 to 255, 259 to 269, 273 to 283, and 287 to 297. The segment at 237–270 is interaction with PPIB; it reads DKPEHIPDPDAKKPEDWDEEMDGEWEPPVIQNPE. The span at 252–261 shows a compositional bias: acidic residues; that stretch reads DWDEEMDGEW. A 3 X approximate repeats region spans residues 259 to 297; sequence GEWEPPVIQNPEYKGEWKPRQIDNPDYKGTWIHPEIDNP. The interval 309-417 is C-domain; it reads ENFAVLGLDL…AAAGQAKDEL (109 aa). Residue Asp-317 coordinates an alpha-D-glucoside. Asp-328 provides a ligand contact to Ca(2+). Residues 350–417 are disordered; that stretch reads TKAAEKQMKD…AAAGQAKDEL (68 aa). The span at 352 to 379 shows a compositional bias: basic and acidic residues; the sequence is AAEKQMKDKQDEEQRLKEEEEEKKRKEE. The span at 380–408 shows a compositional bias: acidic residues; sequence EEVDKEDEEDKDEDEEEEDEKEEEEEEDA. The Prevents secretion from ER motif lies at 414–417; that stretch reads KDEL.

Belongs to the calreticulin family. Monomer. Component of an EIF2 complex at least composed of CELF1/CUGBP1, CALR, CALR3, EIF2S1, EIF2S2, HSP90B1 and HSPA5. Interacts with PDIA3/ERp57 and SPACA9. Interacts with TRIM21. Interacts with NR3C1. Interacts with PPIB. Interacts (via P-domain) with PDIA5. Interacts with CLCC1. In blastocyst expressed in all blastomeres (at protein level). In embryos, expressed in spleen, kidney, liver, fat, muscle, ovary, granulosa cells and cumulus cells.

The protein localises to the endoplasmic reticulum lumen. The protein resides in the cytoplasm. It localises to the cytosol. Its subcellular location is the secreted. It is found in the extracellular space. The protein localises to the extracellular matrix. The protein resides in the cell surface. It localises to the sarcoplasmic reticulum lumen. Its subcellular location is the cytoplasmic vesicle. It is found in the secretory vesicle. The protein localises to the cortical granule. The protein resides in the cytolytic granule. Its function is as follows. Calcium-binding chaperone that promotes folding, oligomeric assembly and quality control in the endoplasmic reticulum (ER) via the calreticulin/calnexin cycle. This lectin interacts transiently with almost all of the monoglucosylated glycoproteins that are synthesized in the ER. Interacts with the DNA-binding domain of NR3C1 and mediates its nuclear export. Involved in maternal gene expression regulation. May participate in oocyte maturation via the regulation of calcium homeostasis. Present in the cortical granules of non-activated oocytes, is exocytosed during the cortical reaction in response to oocyte activation and might participate in the block to polyspermy. The chain is Calreticulin (CALR) from Sus scrofa (Pig).